A 545-amino-acid polypeptide reads, in one-letter code: Glucose-6-phosphate isomerase (545 aa).

The active-site Proton donor is the Glu-351. Catalysis depends on residues His-382 and Lys-510.

Belongs to the GPI family.

It localises to the cytoplasm. The enzyme catalyses alpha-D-glucose 6-phosphate = beta-D-fructose 6-phosphate. It functions in the pathway carbohydrate biosynthesis; gluconeogenesis. Its pathway is carbohydrate degradation; glycolysis; D-glyceraldehyde 3-phosphate and glycerone phosphate from D-glucose: step 2/4. Functionally, catalyzes the reversible isomerization of glucose-6-phosphate to fructose-6-phosphate. This is Glucose-6-phosphate isomerase from Helicobacter pylori (strain P12).